The primary structure comprises 333 residues: MVNQHTAHQLPFASQLPFASTQLAATLISLDDWALATLVGPDTVKYLQGQVTADVGALPDNGHILCAHCDAKGKMWSNLRLFHHGEGFAFIERRNLRDVQLSELKKYAVFSKTAIAPDDNTILLGAAGAGIRELLASVFSQLPDAEHPVVQHEGATLLHFAHPAERFLLVLSPEPSASLLEQLGDKVSLNDSRQWLTLDIEAGQPIIDSANSAQFIPQATNLQALNGISFSKGCYTGQEMVARAKYRGANKRALYWLAGKANKVPQAGDDLELQLGENWRRTGTVLAASQLQNGDVWVQAVLNNDLNAENTLRVRDDADSQLTVQPLPYEITD.

Folate contacts are provided by W33 and W195.

The protein belongs to the tRNA-modifying YgfZ family.

The protein resides in the cytoplasm. In terms of biological role, folate-binding protein involved in regulating the level of ATP-DnaA and in the modification of some tRNAs. It is probably a key factor in regulatory networks that act via tRNA modification, such as initiation of chromosomal replication. The protein is tRNA-modifying protein YgfZ of Pectobacterium atrosepticum (strain SCRI 1043 / ATCC BAA-672) (Erwinia carotovora subsp. atroseptica).